Consider the following 243-residue polypeptide: Phosphoribosylaminoimidazole-succinocarboxamide synthase (243 aa).

It belongs to the SAICAR synthetase family.

It carries out the reaction 5-amino-1-(5-phospho-D-ribosyl)imidazole-4-carboxylate + L-aspartate + ATP = (2S)-2-[5-amino-1-(5-phospho-beta-D-ribosyl)imidazole-4-carboxamido]succinate + ADP + phosphate + 2 H(+). The protein operates within purine metabolism; IMP biosynthesis via de novo pathway; 5-amino-1-(5-phospho-D-ribosyl)imidazole-4-carboxamide from 5-amino-1-(5-phospho-D-ribosyl)imidazole-4-carboxylate: step 1/2. The protein is Phosphoribosylaminoimidazole-succinocarboxamide synthase of Lactiplantibacillus plantarum (strain ATCC BAA-793 / NCIMB 8826 / WCFS1) (Lactobacillus plantarum).